Consider the following 369-residue polypeptide: Uroporphyrinogen decarboxylase (369 aa).

Substrate is bound by residues R28–R32, D78, Y154, S209, and H339.

Belongs to the uroporphyrinogen decarboxylase family. As to quaternary structure, homodimer.

Its subcellular location is the cytoplasm. It carries out the reaction uroporphyrinogen III + 4 H(+) = coproporphyrinogen III + 4 CO2. Its pathway is porphyrin-containing compound metabolism; protoporphyrin-IX biosynthesis; coproporphyrinogen-III from 5-aminolevulinate: step 4/4. In terms of biological role, catalyzes the decarboxylation of four acetate groups of uroporphyrinogen-III to yield coproporphyrinogen-III. This Polaromonas sp. (strain JS666 / ATCC BAA-500) protein is Uroporphyrinogen decarboxylase.